The sequence spans 370 residues: DNA replication and repair protein RecF (370 aa).

30–37 (GENAQGKT) contributes to the ATP binding site.

The protein belongs to the RecF family.

The protein localises to the cytoplasm. Functionally, the RecF protein is involved in DNA metabolism; it is required for DNA replication and normal SOS inducibility. RecF binds preferentially to single-stranded, linear DNA. It also seems to bind ATP. This chain is DNA replication and repair protein RecF, found in Staphylococcus aureus (strain bovine RF122 / ET3-1).